The following is a 679-amino-acid chain: Protein hook (679 aa).

The Calponin-homology (CH) domain maps to 6–123 (NEMYYSLLEW…RLLQLVLGCA (118 aa)). Coiled coils occupy residues 135–437 (EIMC…LKCG) and 480–574 (QTAL…QEIL).

The protein belongs to the hook family. Homodimer. Interacts with microtubules via its N-terminus.

It localises to the cytoplasm. Its subcellular location is the cytoskeleton. It is found in the endosome. The protein localises to the synapse. Functionally, involved in endocytic trafficking by stabilizing organelles of the endocytic pathway. Probably acts as a cytoskeletal linker protein required to tether endosome vesicles to the cytoskeleton. Involved in modulation of endocytosis at stages required for down-regulation of membrane proteins that control synapse size. Not involved in synaptic vesicle recycling. Required in R7 cells for boss endocytosis into multivesicular bodies (MVBs). Has a role in regulating adult longevity. This Drosophila sechellia (Fruit fly) protein is Protein hook.